The chain runs to 218 residues: Small ribosomal subunit protein uS3c (218 aa).

The KH type-2 domain occupies 47–118; sequence VQKNMRTSSG…KLNIAVTRIA (72 aa).

It belongs to the universal ribosomal protein uS3 family. In terms of assembly, part of the 30S ribosomal subunit.

The protein localises to the plastid. The protein resides in the chloroplast. This is Small ribosomal subunit protein uS3c (rps3) from Nicotiana sylvestris (Wood tobacco).